Reading from the N-terminus, the 859-residue chain is Leucine--tRNA ligase (859 aa).

Residues 42 to 52 (PYPSGRLHMGH) carry the 'HIGH' region motif. Residues 618-622 (KMSKS) carry the 'KMSKS' region motif. Residue lysine 621 coordinates ATP.

The protein belongs to the class-I aminoacyl-tRNA synthetase family.

It is found in the cytoplasm. The catalysed reaction is tRNA(Leu) + L-leucine + ATP = L-leucyl-tRNA(Leu) + AMP + diphosphate. This is Leucine--tRNA ligase from Shewanella putrefaciens (strain CN-32 / ATCC BAA-453).